Here is an 88-residue protein sequence, read N- to C-terminus: Actobindin (88 aa).

Methionine 1 bears the N-acetylmethionine mark. Residues 1–22 are disordered; the sequence is MNPELQSAIGQGAALKHAETVD. Position 35 is an N6,N6,N6-trimethyllysine (lysine 35). Residues 37-54 form the WH2 domain; the sequence is DRSSFLEEVAKPHELKHA. Lysine 72 is subject to N6,N6,N6-trimethyllysine.

In terms of assembly, monomer.

Functionally, is able to bind two actin monomers at high concentrations of G-actin. This chain is Actobindin, found in Acanthamoeba castellanii (Amoeba).